The sequence spans 595 residues: S-(+)-linalool synthase, chloroplastic (595 aa).

The N-terminal 46 residues, 1–46 (MVCHVFSSFSSSLIRVLEAPLLLPAASASSSSSSSPASRSGGRRRR), are a transit peptide targeting the chloroplast. Low complexity predominate over residues 27–40 (SASSSSSSSPASRS). The interval 27–54 (SASSSSSSSPASRSGGRRRRAAHVRPSP) is disordered. (2E)-geranyl diphosphate-binding residues include Arg-309, Asp-346, Asp-350, Arg-487, and Asp-490. 2 residues coordinate Mg(2+): Asp-346 and Asp-350. Residues 346–350 (DDIFD) carry the DDXXD motif motif. Mg(2+) is bound by residues Asp-490, Ser-494, and Glu-498.

The protein belongs to the terpene synthase family. Tpsb subfamily. Mg(2+) is required as a cofactor. The cofactor is Mn(2+).

It is found in the plastid. It localises to the chloroplast. It carries out the reaction (2E)-geranyl diphosphate + H2O = (S)-linalool + diphosphate. The protein operates within secondary metabolite biosynthesis; terpenoid biosynthesis. Functionally, involved in monoterpene (C10) biosynthesis. The major product is S-(+)-linalool. Linalool production is induced by jasmonate in response to pathogen attack, it possesses antibacterial activity and is important for resistance to the bacterial blight pathogen Xanthomonas oryzae pv. oryzae (Xoo). Plants over-expressing linalool synthase display enhanced resistance to Xoo. This Oryza sativa subsp. japonica (Rice) protein is S-(+)-linalool synthase, chloroplastic.